Reading from the N-terminus, the 226-residue chain is V-type proton ATPase subunit E (226 aa).

Belongs to the V-ATPase E subunit family. In terms of assembly, V-ATPase is a heteromultimeric enzyme made up of two complexes: the ATP-hydrolytic V1 complex and the proton translocation V0 complex. The V1 complex consists of three catalytic AB heterodimers that form a heterohexamer, three peripheral stalks each consisting of EG heterodimers, one central rotor including subunits D and F, and the regulatory subunits C and H. The proton translocation complex V0 consists of the proton transport subunit a, a ring of proteolipid subunits c9c'', rotary subunit d, subunits e and f, and the accessory subunits VhaAC45 and ATP6AP2.

Subunit of the V1 complex of vacuolar(H+)-ATPase (V-ATPase), a multisubunit enzyme composed of a peripheral complex (V1) that hydrolyzes ATP and a membrane integral complex (V0) that translocates protons. V-ATPase is responsible for acidifying and maintaining the pH of intracellular compartments and in some cell types, is targeted to the plasma membrane, where it is responsible for acidifying the extracellular environment. In Manduca sexta (Tobacco hawkmoth), this protein is V-type proton ATPase subunit E (VHA26).